Here is a 402-residue protein sequence, read N- to C-terminus: Putative F-box protein At3g20030 (402 aa).

Residues 1–56 form the F-box domain; it reads MTMMSDLSQDLLEEILSRVPRTSLGAVRSTCKRWNTLFKDRILCKAEETRDQFRFI.

This chain is Putative F-box protein At3g20030, found in Arabidopsis thaliana (Mouse-ear cress).